The sequence spans 384 residues: N-acetylneuraminate epimerase (384 aa).

An N-terminal signal peptide occupies residues 1-24 (MNMKTLLTYATLLSVTAFSHVVYA). Kelch repeat units lie at residues 46-90 (KVYV…SVIG), 92-145 (YIYL…YSPD), 147-184 (RQIL…RIVD), 185-230 (DYMG…VIEG), 233-281 (VTLI…VAGA), 303-352 (QAFE…TTSE), and 354-383 (VLIV…VEVI). Glu-239 serves as the catalytic Proton acceptor.

It belongs to the NanM family. In terms of assembly, homodimer.

Its subcellular location is the periplasm. It catalyses the reaction N-acetyl-alpha-neuraminate = N-acetyl-beta-neuraminate. In terms of biological role, converts alpha-N-acetylneuranimic acid (Neu5Ac) to the beta-anomer, accelerating the equilibrium between the alpha- and beta-anomers. Probably facilitates sialidase-negative bacteria to compete successfully for limited amounts of extracellular Neu5Ac, which is likely taken up in the beta-anomer. In addition, the rapid removal of sialic acid from solution might be advantageous to the bacterium to damp down host responses. The sequence is that of N-acetylneuraminate epimerase from Vibrio cholerae serotype O1 (strain ATCC 39315 / El Tor Inaba N16961).